Here is a 715-residue protein sequence, read N- to C-terminus: MKFKKKNYTSQVDEMDCGCAALSMILKSYGTEKSLASLRLLAGTTIEGTSALGIKKAGEGLGFVVQVLRADASLFEMKKVPYPFIAHVIKNQKYPHYYVITGANKNSVFIADPDPTVKMTKLSKEVFLSEWTGISLFLSPTPSYQPTKEKTSSLLSFIPIITRQKKVILNIVIASFIVTLINILGSYYLQSMIDSYIPNALMGTLGIISVGLLLTYIIQQVLEFAKAFLLNVLSQRLAIDVILSYIRHIFQLPMSFFSTRRTGEITSRFSDASSILDAIASTILSLFLDLTIVLMTGLILGLQNMQLFLLVLLAIPLYIVVIIIFTPLFERQNHEVMQTNAILNSSIIEDINGIETIKALASEQERYQKIDYEFASYLKEAFTLQQSEAIQTAIKTTVQLVLNVLILWFGATLVMHQKITLGQLITFNALLSYFTNPITNIINLQTKLQKARVANERLNEVYLVPSEFEEKKTELSLSHFNLNMSEISYQYGFGRKVLSEIKLSIKENEKLTIVGISGSGKSTLVKLLVNFFQPTSGTITLGGIDLQQFDKHQLRRLINYLPQQPYIFTGSIMDNLLLGASEATSQEEIIRAVELAEIRADIEQMQLGYQTELSSDASSLSGGQKQRIALARALLSPAKILILDEATSNLDMITEKKILKNLLALDKTIIFIAHRLSVAEMSHRIIVIEQGKVIESGSHSELLAQNGFYAQLYHN.

In terms of domain architecture, Peptidase C39 spans 11 to 138 (QVDEMDCGCA…SEWTGISLFL (128 aa)). Residue Cys-17 is part of the active site. 5 consecutive transmembrane segments (helical) span residues 167–187 (VILN…LGSY), 197–217 (IPNA…LTYI), 237–257 (LAID…MSFF), 282–302 (TILS…ILGL), and 307–327 (LFLL…IFTP). The 283-residue stretch at 168–450 (ILNIVIASFI…IINLQTKLQK (283 aa)) folds into the ABC transmembrane type-1 domain. The ABC transporter domain maps to 482 to 715 (LNMSEISYQY…NGFYAQLYHN (234 aa)). Residue 515–522 (GISGSGKS) participates in ATP binding.

The protein belongs to the ABC transporter superfamily. HlyB family.

The protein localises to the cell membrane. In terms of biological role, involved in the export process of a bacteriocin lactococcin. The chain is Lactococcin transport/processing ATP-binding protein LcnC-like (lcnC) from Lactococcus lactis subsp. lactis (strain IL1403) (Streptococcus lactis).